Reading from the N-terminus, the 220-residue chain is N-(5'-phosphoribosyl)anthranilate isomerase (220 aa).

Belongs to the TrpF family.

It catalyses the reaction N-(5-phospho-beta-D-ribosyl)anthranilate = 1-(2-carboxyphenylamino)-1-deoxy-D-ribulose 5-phosphate. It functions in the pathway amino-acid biosynthesis; L-tryptophan biosynthesis; L-tryptophan from chorismate: step 3/5. The polypeptide is N-(5'-phosphoribosyl)anthranilate isomerase (Agrobacterium fabrum (strain C58 / ATCC 33970) (Agrobacterium tumefaciens (strain C58))).